We begin with the raw amino-acid sequence, 479 residues long: G-rich sequence factor 1 (479 aa).

Residues 1-116 (MAGTRWVLGA…AAAAGPARGY (116 aa)) constitute a mitochondrion transit peptide. RRM domains follow at residues 149–245 (YLIR…PSPV) and 249–325 (GVVR…PSRR). Position 243 is a phosphoserine (Ser-243). Phosphoserine is present on Ser-334. The region spanning 400–479 (HFVHMRGLPF…LFLNSCPKGK (80 aa)) is the RRM 3 domain.

As to quaternary structure, monomer. Found in a complex with DDX28, DHX30, FASTKD2 and FASTKD5. Interacts with the mitochondrial RNase P complex subunit TRMT10C/MRPP1. Interacts with the 2 components of the mitochondrial degradosome complex, PNPT1 and SUPV3L1, in an RNA-dependent manner.

It is found in the mitochondrion matrix. In terms of biological role, regulator of post-transcriptional mitochondrial gene expression, required for assembly of the mitochondrial ribosome and for recruitment of mRNA and lncRNA. Binds RNAs containing the 14 base G-rich element. Preferentially binds RNAs transcribed from three contiguous genes on the light strand of mtDNA, the ND6 mRNA, and the long non-coding RNAs for MT-CYB and MT-ND5, each of which contains multiple consensus binding sequences. Involved in the degradosome-mediated decay of non-coding mitochondrial transcripts (MT-ncRNA) and tRNA-like molecules. Acts by unwinding G-quadruplex RNA structures in MT-ncRNA, thus facilitating their degradation by the degradosome. G-quadruplexes (G4) are non-canonical 4 stranded structures formed by transcripts from the light strand of mtDNA. This chain is G-rich sequence factor 1 (Grsf1), found in Mus musculus (Mouse).